We begin with the raw amino-acid sequence, 326 residues long: GTP 3',8-cyclase (326 aa).

The 223-residue stretch at 5 to 227 (GHGRTVDYLR…ALGREGASPS (223 aa)) folds into the Radical SAM core domain. Residue R14 participates in GTP binding. Residues C21 and C25 each coordinate [4Fe-4S] cluster. S-adenosyl-L-methionine is bound at residue Y27. C28 contributes to the [4Fe-4S] cluster binding site. R64 contacts GTP. Residue G68 coordinates S-adenosyl-L-methionine. T95 lines the GTP pocket. Position 119 (S119) interacts with S-adenosyl-L-methionine. K155 serves as a coordination point for GTP. Position 189 (M189) interacts with S-adenosyl-L-methionine. Residues C250 and C253 each coordinate [4Fe-4S] cluster. Residue 255 to 257 (RIR) participates in GTP binding. Residue C267 coordinates [4Fe-4S] cluster.

It belongs to the radical SAM superfamily. MoaA family. Monomer and homodimer. [4Fe-4S] cluster is required as a cofactor.

The enzyme catalyses GTP + AH2 + S-adenosyl-L-methionine = (8S)-3',8-cyclo-7,8-dihydroguanosine 5'-triphosphate + 5'-deoxyadenosine + L-methionine + A + H(+). It functions in the pathway cofactor biosynthesis; molybdopterin biosynthesis. Catalyzes the cyclization of GTP to (8S)-3',8-cyclo-7,8-dihydroguanosine 5'-triphosphate. This is GTP 3',8-cyclase from Sulfurovum sp. (strain NBC37-1).